Reading from the N-terminus, the 569-residue chain is 2-succinyl-5-enolpyruvyl-6-hydroxy-3-cyclohexene-1-carboxylate synthase (569 aa).

It belongs to the TPP enzyme family. MenD subfamily. Homodimer. Requires Mg(2+) as cofactor. Mn(2+) is required as a cofactor. The cofactor is thiamine diphosphate.

The catalysed reaction is isochorismate + 2-oxoglutarate + H(+) = 5-enolpyruvoyl-6-hydroxy-2-succinyl-cyclohex-3-ene-1-carboxylate + CO2. It participates in quinol/quinone metabolism; 1,4-dihydroxy-2-naphthoate biosynthesis; 1,4-dihydroxy-2-naphthoate from chorismate: step 2/7. The protein operates within cofactor biosynthesis; phylloquinone biosynthesis. Its function is as follows. Catalyzes the thiamine diphosphate-dependent decarboxylation of 2-oxoglutarate and the subsequent addition of the resulting succinic semialdehyde-thiamine pyrophosphate anion to isochorismate to yield 2-succinyl-5-enolpyruvyl-6-hydroxy-3-cyclohexene-1-carboxylate (SEPHCHC). The sequence is that of 2-succinyl-5-enolpyruvyl-6-hydroxy-3-cyclohexene-1-carboxylate synthase from Microcystis aeruginosa (strain NIES-843 / IAM M-2473).